Consider the following 216-residue polypeptide: Major fimbrial subunit (216 aa).

Positions 1 to 20 (MKKTLLGSLILLAFAGNVQA) are cleaved as a signal peptide. Residues Cys-41 and Cys-81 are joined by a disulfide bond.

The protein belongs to the fimbrial protein family.

It is found in the fimbrium. Mediates adherence to oropharyngeal epithelial cells. Helps the airway colonization process. The sequence is that of Major fimbrial subunit (hifA) from Haemophilus influenzae.